A 488-amino-acid polypeptide reads, in one-letter code: Rhamnulokinase (488 aa).

11–15 (ASSGR) provides a ligand contact to ATP. Substrate contacts are provided by residues Ala-79 and 234-236 (HDT). Asp-235 serves as the catalytic Proton acceptor. An ATP-binding site is contributed by Thr-257. Asn-294 is a binding site for substrate. Positions 302 and 401 each coordinate ATP.

This sequence belongs to the rhamnulokinase family. The cofactor is Mg(2+).

The enzyme catalyses L-rhamnulose + ATP = L-rhamnulose 1-phosphate + ADP + H(+). It functions in the pathway carbohydrate degradation; L-rhamnose degradation; glycerone phosphate from L-rhamnose: step 2/3. Involved in the catabolism of L-rhamnose (6-deoxy-L-mannose). Catalyzes the transfer of the gamma-phosphate group from ATP to the 1-hydroxyl group of L-rhamnulose to yield L-rhamnulose 1-phosphate. The polypeptide is Rhamnulokinase (Lactiplantibacillus plantarum (strain ATCC BAA-793 / NCIMB 8826 / WCFS1) (Lactobacillus plantarum)).